Consider the following 314-residue polypeptide: Small ribosomal subunit biogenesis GTPase RsgA (314 aa).

The disordered stretch occupies residues 1–20 (MKRAPTKQPAKPAARGGERA). The region spanning 85-246 (SDQFKSKLFA…LIDSPGFQEF (162 aa)) is the CP-type G domain. GTP-binding positions include 134–137 (NKID) and 188–196 (GQSGMGKST). Zn(2+)-binding residues include cysteine 270, cysteine 275, histidine 277, and cysteine 283.

This sequence belongs to the TRAFAC class YlqF/YawG GTPase family. RsgA subfamily. Monomer. Associates with 30S ribosomal subunit, binds 16S rRNA. It depends on Zn(2+) as a cofactor.

The protein resides in the cytoplasm. In terms of biological role, one of several proteins that assist in the late maturation steps of the functional core of the 30S ribosomal subunit. Helps release RbfA from mature subunits. May play a role in the assembly of ribosomal proteins into the subunit. Circularly permuted GTPase that catalyzes slow GTP hydrolysis, GTPase activity is stimulated by the 30S ribosomal subunit. The protein is Small ribosomal subunit biogenesis GTPase RsgA of Burkholderia pseudomallei (strain K96243).